The following is a 127-amino-acid chain: Ribonuclease P protein component (127 aa).

Belongs to the RnpA family. In terms of assembly, consists of a catalytic RNA component (M1 or rnpB) and a protein subunit.

The catalysed reaction is Endonucleolytic cleavage of RNA, removing 5'-extranucleotides from tRNA precursor.. In terms of biological role, RNaseP catalyzes the removal of the 5'-leader sequence from pre-tRNA to produce the mature 5'-terminus. It can also cleave other RNA substrates such as 4.5S RNA. The protein component plays an auxiliary but essential role in vivo by binding to the 5'-leader sequence and broadening the substrate specificity of the ribozyme. The chain is Ribonuclease P protein component from Rippkaea orientalis (strain PCC 8801 / RF-1) (Cyanothece sp. (strain PCC 8801)).